The following is a 317-amino-acid chain: Small ribosomal subunit biogenesis GTPase RsgA (317 aa).

Residues 88–249 form the CP-type G domain; that stretch reads DQYKSKLFAA…LIDSPGFQEF (162 aa). Residues 136–139 and 190–198 contribute to the GTP site; these read NKID and GQSGMGKST. Cys-273, Cys-278, His-280, and Cys-286 together coordinate Zn(2+).

Belongs to the TRAFAC class YlqF/YawG GTPase family. RsgA subfamily. In terms of assembly, monomer. Associates with 30S ribosomal subunit, binds 16S rRNA. It depends on Zn(2+) as a cofactor.

Its subcellular location is the cytoplasm. Functionally, one of several proteins that assist in the late maturation steps of the functional core of the 30S ribosomal subunit. Helps release RbfA from mature subunits. May play a role in the assembly of ribosomal proteins into the subunit. Circularly permuted GTPase that catalyzes slow GTP hydrolysis, GTPase activity is stimulated by the 30S ribosomal subunit. This chain is Small ribosomal subunit biogenesis GTPase RsgA, found in Paraburkholderia phymatum (strain DSM 17167 / CIP 108236 / LMG 21445 / STM815) (Burkholderia phymatum).